Consider the following 164-residue polypeptide: Small ribosomal subunit protein uS5 (164 aa).

An S5 DRBM domain is found at 10 to 73 (IEERVVAINR…ESAKKNMIEV (64 aa)).

This sequence belongs to the universal ribosomal protein uS5 family. Part of the 30S ribosomal subunit. Contacts proteins S4 and S8.

With S4 and S12 plays an important role in translational accuracy. Functionally, located at the back of the 30S subunit body where it stabilizes the conformation of the head with respect to the body. This is Small ribosomal subunit protein uS5 from Streptococcus suis (strain 98HAH33).